The following is a 689-amino-acid chain: Glycine--tRNA ligase beta subunit (689 aa).

This sequence belongs to the class-II aminoacyl-tRNA synthetase family. As to quaternary structure, tetramer of two alpha and two beta subunits.

It is found in the cytoplasm. It catalyses the reaction tRNA(Gly) + glycine + ATP = glycyl-tRNA(Gly) + AMP + diphosphate. In Acinetobacter baumannii (strain ACICU), this protein is Glycine--tRNA ligase beta subunit.